Reading from the N-terminus, the 124-residue chain is MATVNQLVRKPRAPKVDKTNVPALNACPQKRGVCTRVYTTTPKKPNSALRKVARVRLTNGFEVTSYIGGEGHNLQEHSVILIRGGRVKDLPGVRYHTVRGALDCAGVSSRRQGRSKYGAKRPKS.

Residue Asp89 is modified to 3-methylthioaspartic acid.

The protein belongs to the universal ribosomal protein uS12 family. In terms of assembly, part of the 30S ribosomal subunit. Contacts proteins S8 and S17. May interact with IF1 in the 30S initiation complex.

In terms of biological role, with S4 and S5 plays an important role in translational accuracy. Interacts with and stabilizes bases of the 16S rRNA that are involved in tRNA selection in the A site and with the mRNA backbone. Located at the interface of the 30S and 50S subunits, it traverses the body of the 30S subunit contacting proteins on the other side and probably holding the rRNA structure together. The combined cluster of proteins S8, S12 and S17 appears to hold together the shoulder and platform of the 30S subunit. In Shewanella putrefaciens (strain CN-32 / ATCC BAA-453), this protein is Small ribosomal subunit protein uS12.